We begin with the raw amino-acid sequence, 525 residues long: NAD(P)H-quinone oxidoreductase chain 4-1 (525 aa).

14 consecutive transmembrane segments (helical) span residues 4–24 (FPWL…IPII), 37–57 (LAVG…GFDL), 89–109 (LIIL…PVTL), 111–131 (PKLF…VFAV), 134–154 (ILLF…ILSI), 167–187 (FILY…TLAF), 210–230 (LLLY…FPLH), 241–261 (TAPA…YALL), 273–293 (AVFA…AAFT), 309–329 (ISHM…GMSG), 330–350 (AMLQ…MVGA), 385–405 (LALP…GFAT), 416–436 (IVVV…LSML), and 462–482 (VFII…PKLI).

Belongs to the complex I subunit 4 family.

Its subcellular location is the cellular thylakoid membrane. The enzyme catalyses a plastoquinone + NADH + (n+1) H(+)(in) = a plastoquinol + NAD(+) + n H(+)(out). It carries out the reaction a plastoquinone + NADPH + (n+1) H(+)(in) = a plastoquinol + NADP(+) + n H(+)(out). NDH-1 shuttles electrons from NAD(P)H, via FMN and iron-sulfur (Fe-S) centers, to quinones in the respiratory chain. The immediate electron acceptor for the enzyme in this species is believed to be plastoquinone. Couples the redox reaction to proton translocation (for every two electrons transferred, four hydrogen ions are translocated across the cytoplasmic membrane), and thus conserves the redox energy in a proton gradient. This is NAD(P)H-quinone oxidoreductase chain 4-1 (ndhD1) from Synechocystis sp. (strain ATCC 27184 / PCC 6803 / Kazusa).